A 245-amino-acid chain; its full sequence is Acetylglutamate kinase (245 aa).

Substrate-binding positions include 41–42, R63, and N156; that span reads GG.

Belongs to the acetylglutamate kinase family. ArgB subfamily.

Its subcellular location is the cytoplasm. It catalyses the reaction N-acetyl-L-glutamate + ATP = N-acetyl-L-glutamyl 5-phosphate + ADP. It functions in the pathway amino-acid biosynthesis; L-arginine biosynthesis; N(2)-acetyl-L-ornithine from L-glutamate: step 2/4. In terms of biological role, catalyzes the ATP-dependent phosphorylation of N-acetyl-L-glutamate. The polypeptide is Acetylglutamate kinase (Streptococcus gordonii (strain Challis / ATCC 35105 / BCRC 15272 / CH1 / DL1 / V288)).